A 465-amino-acid chain; its full sequence is L-seryl-tRNA(Sec) selenium transferase (465 aa).

The residue at position 294 (lysine 294) is an N6-(pyridoxal phosphate)lysine.

It belongs to the SelA family. The cofactor is pyridoxal 5'-phosphate.

It localises to the cytoplasm. The enzyme catalyses L-seryl-tRNA(Sec) + selenophosphate + H(+) = L-selenocysteinyl-tRNA(Sec) + phosphate. Its pathway is aminoacyl-tRNA biosynthesis; selenocysteinyl-tRNA(Sec) biosynthesis; selenocysteinyl-tRNA(Sec) from L-seryl-tRNA(Sec) (bacterial route): step 1/1. Functionally, converts seryl-tRNA(Sec) to selenocysteinyl-tRNA(Sec) required for selenoprotein biosynthesis. In Mannheimia succiniciproducens (strain KCTC 0769BP / MBEL55E), this protein is L-seryl-tRNA(Sec) selenium transferase.